A 262-amino-acid chain; its full sequence is Indole-3-glycerol phosphate synthase (262 aa).

It belongs to the TrpC family.

It carries out the reaction 1-(2-carboxyphenylamino)-1-deoxy-D-ribulose 5-phosphate + H(+) = (1S,2R)-1-C-(indol-3-yl)glycerol 3-phosphate + CO2 + H2O. Its pathway is amino-acid biosynthesis; L-tryptophan biosynthesis; L-tryptophan from chorismate: step 4/5. This is Indole-3-glycerol phosphate synthase from Dechloromonas aromatica (strain RCB).